The following is a 331-amino-acid chain: Ketol-acid reductoisomerase (NADP(+)) (331 aa).

One can recognise a KARI N-terminal Rossmann domain in the interval 2 to 182; the sequence is AQLFYDTDAD…GGTRAGILET (181 aa). NADP(+) is bound by residues 25-28, Ser51, Ser53, and 83-86; these read YGSQ and DEFQ. The active site involves His108. NADP(+) is bound at residue Gly134. The KARI C-terminal knotted domain maps to 183–328; that stretch reads NFKEETETDL…KGLRSMFSWL (146 aa). The Mg(2+) site is built by Asp191, Glu195, Glu227, and Glu231. Residue Ser252 coordinates substrate.

It belongs to the ketol-acid reductoisomerase family. Requires Mg(2+) as cofactor.

It carries out the reaction (2R)-2,3-dihydroxy-3-methylbutanoate + NADP(+) = (2S)-2-acetolactate + NADPH + H(+). The enzyme catalyses (2R,3R)-2,3-dihydroxy-3-methylpentanoate + NADP(+) = (S)-2-ethyl-2-hydroxy-3-oxobutanoate + NADPH + H(+). Its pathway is amino-acid biosynthesis; L-isoleucine biosynthesis; L-isoleucine from 2-oxobutanoate: step 2/4. It functions in the pathway amino-acid biosynthesis; L-valine biosynthesis; L-valine from pyruvate: step 2/4. In terms of biological role, involved in the biosynthesis of branched-chain amino acids (BCAA). Catalyzes an alkyl-migration followed by a ketol-acid reduction of (S)-2-acetolactate (S2AL) to yield (R)-2,3-dihydroxy-isovalerate. In the isomerase reaction, S2AL is rearranged via a Mg-dependent methyl migration to produce 3-hydroxy-3-methyl-2-ketobutyrate (HMKB). In the reductase reaction, this 2-ketoacid undergoes a metal-dependent reduction by NADPH to yield (R)-2,3-dihydroxy-isovalerate. The chain is Ketol-acid reductoisomerase (NADP(+)) from Synechococcus sp. (strain WH7803).